Consider the following 636-residue polypeptide: MAKQNLKSTDRAVQQMLDKAKREGIQTVWDRYEAMKPQCGFGETGLCCRHCLQGPCRINPFGDEPKVGICGATAEVIVARGLDRSIAAGAAGHSGHAKHLAHTLKKAVQGKAASYMIKDRTKLHSIAKRLGIPTEGQKDEDIALEVAKAALADFHEKDTPVLWVTTVLPPSRVKVLSAHGLIPAGIDHEIAEIMHRTSMGCDADAQNLLLGGLRCSLADLAGCYMGTDLADILFGTPAPVVTESNLGVLKADAVNVAVHGHNPVLSDIIVSVSKEMENEARAAGATGINVVGICCTGNEVLMRHGIPACTHSVSQEMAMITGALDAMILDYQCIQPSVATIAECTGTTVITTMEMSKITGATHVNFAEEAAVENAKQILRLAIDTFKRRKGKPVEIPNIKTKVVAGFSTEAIINALSKLNANDPLKPLIDNVVNGNIRGVCLFAGCNNVKVPQDQNFTTIARKLLKQNVLVVATGCGAGALMRHGFMDPANVDELCGDGLKAVLTAIGEANGLGGPLPPVLHMGSCVDNSRAVALVAALANRLGVDLDRLPVVASAAEAMHEKAVAIGTWAVTIGLPTHIGVLPPITGSLPVTQILTSSVKDITGGYFIVELDPETAADKLLAAINERRAGLGLPW.

Residues C39, C47, C48, C51, C56, and C70 each contribute to the [4Fe-4S] cluster site. [Ni-4Fe-5S] cluster-binding residues include H261, C295, C333, C446, C476, and C526.

Belongs to the Ni-containing carbon monoxide dehydrogenase family. Homodimer. [4Fe-4S] cluster serves as cofactor. [Ni-4Fe-5S] cluster is required as a cofactor.

It is found in the cytoplasm. Its subcellular location is the cell membrane. It carries out the reaction CO + 2 oxidized [2Fe-2S]-[ferredoxin] + H2O = 2 reduced [2Fe-2S]-[ferredoxin] + CO2 + 2 H(+). Its activity is regulated as follows. Inactivated by O(2). In terms of biological role, CODH oxidizes carbon monoxide coupled, via CooF, to the reduction of a hydrogen cation by a hydrogenase (possibly CooH). This chain is Carbon monoxide dehydrogenase 2 (cooS2), found in Carboxydothermus hydrogenoformans (strain ATCC BAA-161 / DSM 6008 / Z-2901).